Consider the following 251-residue polypeptide: Small ribosomal subunit protein uS2 (251 aa).

It belongs to the universal ribosomal protein uS2 family.

This is Small ribosomal subunit protein uS2 from Azoarcus sp. (strain BH72).